The chain runs to 127 residues: MARVKRAVNAHKKRRVVLERASGYRGQRSRLYRKAKEQLLHSFNYNFRDRKARKGDFRKLWIQRINAAVRAEGITYNRFIQGLRLAGIELDRRALAEIAVSDPNTFKTIVDAAKAALPEDVNAPVEA.

This sequence belongs to the bacterial ribosomal protein bL20 family.

Binds directly to 23S ribosomal RNA and is necessary for the in vitro assembly process of the 50S ribosomal subunit. It is not involved in the protein synthesizing functions of that subunit. This chain is Large ribosomal subunit protein bL20, found in Bifidobacterium longum (strain NCC 2705).